A 736-amino-acid polypeptide reads, in one-letter code: Neprilysin-2 (736 aa).

Topologically, residues 1–19 are cytoplasmic; that stretch reads MRPDEEDGTTKSPGSRWTR. Residues 20 to 40 form a helical; Signal-anchor for type II membrane protein membrane-spanning segment; sequence IWAIIALILLILFLLVLGAAI. Topologically, residues 41–736 are extracellular; the sequence is YFYINYKDSS…MNPREKCRVW (696 aa). Residues 52-736 enclose the Peptidase M13 domain; sequence VCLSPGCIKT…MNPREKCRVW (685 aa). Disulfide bonds link Cys-53-Cys-58, Cys-76-Cys-721, Cys-84-Cys-681, Cys-142-Cys-399, and Cys-608-Cys-733. A coiled-coil region spans residues 103–123; sequence FENLGQDLEFALKELLDENDE. A Zn(2+)-binding site is contributed by His-571. Glu-572 is an active-site residue. The Zn(2+) site is built by His-575 and Glu-633. Asp-637 (proton donor) is an active-site residue.

It belongs to the peptidase M13 family. Zn(2+) serves as cofactor. Expressed in muscle cells, GLR cells, SMB motor neurons and AIM interneurons.

It localises to the membrane. Functionally, required for olfactory plasticity, which is the change from positive chemotaxis to dispersal after prolonged exposure to an odorant. Thought to antagonise snet-1 by degrading excess snet-1 peptides and thus enabling olfactory plasticity. The polypeptide is Neprilysin-2 (Caenorhabditis elegans).